A 469-amino-acid polypeptide reads, in one-letter code: Glutamine synthetase (469 aa).

The GS beta-grasp domain occupies 15–96 (NDVKFIDVRF…INFFIHDPIT (82 aa)). Residues 104-469 (PRNIAKKAEA…PHEFELYFDI (366 aa)) form the GS catalytic domain. Mg(2+) is bound by residues Glu129 and Glu131. Residue Glu205 participates in ATP binding. Glu210 and Glu218 together coordinate Mg(2+). 221–223 (YKF) provides a ligand contact to ATP. L-glutamate is bound by residues 262 to 263 (NG) and Gly263. Residue His267 coordinates Mg(2+). Residues 269–271 (HQS) and Ser271 contribute to the ATP site. The L-glutamate site is built by Arg320, Glu326, and Arg338. Arg338, Arg343, and Lys352 together coordinate ATP. Glu357 is a binding site for Mg(2+). Arg359 provides a ligand contact to L-glutamate. The residue at position 397 (Tyr397) is an O-AMP-tyrosine.

Belongs to the glutamine synthetase family. In terms of assembly, oligomer of 12 subunits arranged in the form of two hexagons. It depends on Mg(2+) as a cofactor.

Its subcellular location is the cytoplasm. The catalysed reaction is L-glutamate + NH4(+) + ATP = L-glutamine + ADP + phosphate + H(+). With respect to regulation, the activity of this enzyme could be controlled by adenylation under conditions of abundant glutamine. In terms of biological role, catalyzes the ATP-dependent biosynthesis of glutamine from glutamate and ammonia. The chain is Glutamine synthetase from Streptomyces filamentosus (Streptomyces roseosporus).